We begin with the raw amino-acid sequence, 434 residues long: Cysteine--tRNA ligase (434 aa).

Residue Cys-28 coordinates Zn(2+). The 'HIGH' region motif lies at 30 to 40 (PTVYDDIHIGN). Zn(2+) contacts are provided by Cys-207, His-232, and Glu-236. The short motif at 264–268 (KMSKS) is the 'KMSKS' region element. Lys-267 contacts ATP.

The protein belongs to the class-I aminoacyl-tRNA synthetase family. As to quaternary structure, monomer. It depends on Zn(2+) as a cofactor.

The protein resides in the cytoplasm. The enzyme catalyses tRNA(Cys) + L-cysteine + ATP = L-cysteinyl-tRNA(Cys) + AMP + diphosphate. This Acholeplasma laidlawii (strain PG-8A) protein is Cysteine--tRNA ligase.